The following is a 526-amino-acid chain: Opine oxidase subunit A (526 aa).

Positions 396, 398, 431, and 436 each coordinate [2Fe-2S] cluster.

It to T-protein and to dimethylglycine dehydrogenase. In terms of assembly, heterodimer of a subunit A and a subunit B. [2Fe-2S] cluster is required as a cofactor.

The protein operates within opine metabolism; octopine degradation. Oxidative cleavage of octopine into L-arginine and pyruvate. The polypeptide is Opine oxidase subunit A (ooxA) (Rhizobium meliloti (Ensifer meliloti)).